A 361-amino-acid chain; its full sequence is Mannonate dehydratase 1 (361 aa).

This sequence belongs to the mannonate dehydratase family. Fe(2+) serves as cofactor. Requires Mn(2+) as cofactor.

It catalyses the reaction D-mannonate = 2-dehydro-3-deoxy-D-gluconate + H2O. Its pathway is carbohydrate metabolism; pentose and glucuronate interconversion. Its function is as follows. Catalyzes the dehydration of D-mannonate. This chain is Mannonate dehydratase 1 (uxuA1), found in Halalkalibacterium halodurans (strain ATCC BAA-125 / DSM 18197 / FERM 7344 / JCM 9153 / C-125) (Bacillus halodurans).